Consider the following 298-residue polypeptide: GTPase Era (298 aa).

Positions 3 to 170 constitute an Era-type G domain; it reads KSGFVTIVGR…VELMKKAMPE (168 aa). The G1 stretch occupies residues 11–18; the sequence is GRPNVGKS. 11 to 18 contributes to the GTP binding site; it reads GRPNVGKS. The segment at 37–41 is G2; it reads QTTRN. Residues 58-61 form a G3 region; that stretch reads DTPG. GTP-binding positions include 58–62 and 120–123; these read DTPGI and NKVD. Residues 120 to 123 form a G4 region; that stretch reads NKVD. A G5 region spans residues 149–151; that stretch reads ISA. The KH type-2 domain occupies 201–278; the sequence is LRDEVPHGIA…NLKIWVKVRK (78 aa).

The protein belongs to the TRAFAC class TrmE-Era-EngA-EngB-Septin-like GTPase superfamily. Era GTPase family. In terms of assembly, monomer.

It localises to the cytoplasm. It is found in the cell membrane. An essential GTPase that binds both GDP and GTP, with rapid nucleotide exchange. Plays a role in 16S rRNA processing and 30S ribosomal subunit biogenesis and possibly also in cell cycle regulation and energy metabolism. The protein is GTPase Era of Clostridium beijerinckii (strain ATCC 51743 / NCIMB 8052) (Clostridium acetobutylicum).